The following is a 137-amino-acid chain: Holo-[acyl-carrier-protein] synthase (137 aa).

2 residues coordinate Mg(2+): aspartate 8 and glutamate 58.

The protein belongs to the P-Pant transferase superfamily. AcpS family. It depends on Mg(2+) as a cofactor.

The protein localises to the cytoplasm. The catalysed reaction is apo-[ACP] + CoA = holo-[ACP] + adenosine 3',5'-bisphosphate + H(+). In terms of biological role, transfers the 4'-phosphopantetheine moiety from coenzyme A to a Ser of acyl-carrier-protein. This Lactobacillus delbrueckii subsp. bulgaricus (strain ATCC 11842 / DSM 20081 / BCRC 10696 / JCM 1002 / NBRC 13953 / NCIMB 11778 / NCTC 12712 / WDCM 00102 / Lb 14) protein is Holo-[acyl-carrier-protein] synthase.